We begin with the raw amino-acid sequence, 299 residues long: Oxygen-dependent coproporphyrinogen-III oxidase (299 aa).

Residue serine 92 coordinates substrate. Residues histidine 96 and histidine 106 each contribute to the a divalent metal cation site. Histidine 106 (proton donor) is an active-site residue. Residue 108–110 (NVR) participates in substrate binding. The a divalent metal cation site is built by histidine 145 and histidine 175. The important for dimerization stretch occupies residues 239-274 (YVEFNLVYDRGTLFGLQSGGRAESILMSLPPQVRWE). Residue 257–259 (GGR) coordinates substrate.

This sequence belongs to the aerobic coproporphyrinogen-III oxidase family. Homodimer. Requires a divalent metal cation as cofactor.

It is found in the cytoplasm. The enzyme catalyses coproporphyrinogen III + O2 + 2 H(+) = protoporphyrinogen IX + 2 CO2 + 2 H2O. The protein operates within porphyrin-containing compound metabolism; protoporphyrin-IX biosynthesis; protoporphyrinogen-IX from coproporphyrinogen-III (O2 route): step 1/1. Functionally, involved in the heme biosynthesis. Catalyzes the aerobic oxidative decarboxylation of propionate groups of rings A and B of coproporphyrinogen-III to yield the vinyl groups in protoporphyrinogen-IX. The polypeptide is Oxygen-dependent coproporphyrinogen-III oxidase (Xanthomonas campestris pv. campestris (strain 8004)).